The chain runs to 324 residues: Aldo-keto reductase family 1 member A1 (324 aa).

Residue Ser3 is modified to Phosphoserine. NADP(+) is bound by residues 10–19, Thr20, and Trp21; that span reads GQKMPLIGLG. Ser37 carries the post-translational modification Phosphoserine. Position 44 (Asp44) interacts with NADP(+). Residue Tyr49 is the Proton donor of the active site. Lys126 bears the N6-acetyllysine; alternate mark. An N6-succinyllysine; alternate modification is found at Lys126. Lys144 carries the post-translational modification N6-succinyllysine. NADP(+) is bound by residues Ser161, Asn162, Ser210, Leu212, Ser214, Ser215, Lys262, Ser263, Ile264, Thr265, Arg268, Gln271, and Asn272. Phosphoserine is present on Ser210.

Belongs to the aldo/keto reductase family.

It localises to the cytoplasm. It is found in the cytosol. The protein localises to the apical cell membrane. The catalysed reaction is a primary alcohol + NADP(+) = an aldehyde + NADPH + H(+). It carries out the reaction L-gulonate + NADP(+) = aldehydo-D-glucuronate + NADPH + H(+). It catalyses the reaction L-gulono-1,4-lactone + NADP(+) = D-glucurono-3,6-lactone + NADPH + H(+). The enzyme catalyses allyl alcohol + NADP(+) = acrolein + NADPH + H(+). The catalysed reaction is glycerol + NADP(+) = D-glyceraldehyde + NADPH + H(+). It carries out the reaction glycerol + NADP(+) = L-glyceraldehyde + NADPH + H(+). It catalyses the reaction hydroxyacetone + NADP(+) = methylglyoxal + NADPH + H(+). The enzyme catalyses 3-deoxyfructose + NADP(+) = 3-deoxyglucosone + NADPH + H(+). The catalysed reaction is (R)-mevalonate + NADP(+) = (R)-mevaldate + NADPH + H(+). It carries out the reaction S-nitroso-CoA + NADPH + H(+) = sulfinamide-CoA + NADP(+). It catalyses the reaction S-nitrosoglutathione + NADPH + H(+) = S-(hydroxysulfenamide)glutathione + NADP(+). Its function is as follows. Catalyzes the NADPH-dependent reduction of a wide variety of carbonyl-containing compounds to their corresponding alcohols. Displays enzymatic activity towards endogenous metabolites such as aromatic and aliphatic aldehydes, ketones, monosaccharides and bile acids, with a preference for negatively charged substrates, such as glucuronate and succinic semialdehyde. Plays an important role by catalyzing the reduction of D-glucuronic acid and D-glucurono-gamma-lactone. Functions as a detoxifiying enzyme by reducing a range of toxic aldehydes. Reduces methylglyoxal and 3-deoxyglucosone, which are present at elevated levels under hyperglycemic conditions and are cytotoxic. Involved also in the detoxification of lipid-derived aldehydes like acrolein. Plays a role in the activation of procarcinogens, such as polycyclic aromatic hydrocarbon trans-dihydrodiols, and in the metabolism of various xenobiotics and drugs. Also acts as an inhibitor of protein S-nitrosylation by mediating degradation of S-nitroso-coenzyme A (S-nitroso-CoA), a cofactor required to S-nitrosylate proteins. S-nitroso-CoA reductase activity is involved in reprogramming intermediary metabolism in renal proximal tubules, notably by inhibiting protein S-nitrosylation of isoform 2 of PKM (PKM2). Also acts as a S-nitroso-glutathione reductase by catalyzing the NADPH-dependent reduction of S-nitrosoglutathione. Displays no reductase activity towards retinoids. The chain is Aldo-keto reductase family 1 member A1 (AKR1A1) from Cricetulus griseus (Chinese hamster).